We begin with the raw amino-acid sequence, 81 residues long: Sulfur carrier protein TusA (81 aa).

C19 functions as the Cysteine persulfide intermediate in the catalytic mechanism.

Belongs to the sulfur carrier protein TusA family.

The protein localises to the cytoplasm. Functionally, sulfur carrier protein which probably makes part of a sulfur-relay system. This is Sulfur carrier protein TusA from Shewanella piezotolerans (strain WP3 / JCM 13877).